The following is a 119-amino-acid chain: Beta-2-microglobulin (119 aa).

The first 20 residues, 1–20 (MARLVVVALLVLLCLSGLEA), serve as a signal peptide directing secretion. Residues 25–114 (PKIQVYSRHP…VTFTAPKTVK (90 aa)) enclose the Ig-like C1-type domain. A disulfide bridge connects residues cysteine 45 and cysteine 100.

The protein belongs to the beta-2-microglobulin family. As to quaternary structure, heterodimer of an alpha chain and a beta chain. Beta-2-microglobulin is the beta-chain of major histocompatibility complex class I molecules.

Its subcellular location is the secreted. In terms of biological role, component of the class I major histocompatibility complex (MHC). Involved in the presentation of peptide antigens to the immune system. The protein is Beta-2-microglobulin (B2M) of Chiropotes satanas (Brown-bearded saki).